Consider the following 1235-residue polypeptide: MPSNSKRSMAPPTNVSKQISATSTSKKAPTKPTTQNSIAGAKSTGSPETRTSSPEHMESPETPTATTTVNRKKQKRRQKQAARLAAERQSSNMPAQNGDGGHDIVADFSRAATQGQHAAFDNDDLDYTDDETHYSTQGQRGLQHDKNGVLHQSQEPSKRKGKKKKNRKSRSQSHQAEGSSTSMSTPSASLARPVTLPPLSSSAYRSAHKVTKDRIWNTSTHEERERIKEFWLQLGEEERRSLVKVEKEAVLRKMKEQQKHSCSCTVCGRKRTAIEEELEVLYDAYYEELEQYANHKQGSFENGAPIGAPPRLYQPPLRTLDRHSHHPVAQHPSRGRVQELPDDDEDLDDDYDEDDEDDEPYSEDELEDAARTTRADFFAFGNSLTVKDGILTVADDLLKNDGKHFIDMMEQLAERRMQREEDTQYAAASAAHQSMHAGHNHGPPLDEEEYDDEEEEDYDSQDDEEYEEDEMDAMTEEQRMEEGRRMFQIFAARMFEQRVLTAYREKIARERQERLIEELEEENRLDVEREAKKAREAQKRKDKKKLQKQAKEEERAKREAERAAEEAAQKALEEKRLEEQRRKKEEQRKKREAEKKAQEEERQRKEAERQKRLKEERERQAEFERKQREQKEREKKKREEAKKREREEKEAKERELREKKIKEERERREREEKARQEKEAAAKAERESREKAKREEQAAQQAAAQAAAVQAAKRASQSGPTHLPPGLQHPQGPSALQSPHFQVATPVVPKAPTPIRPRQPSQQGSHASSPRSQPAHVDISQTSSLSPGSVSTTIPGKGVSQAPLLHHPQPSAPLSPLGGVGRGSHTLGFSPMQSLNGLPTNPGTIPAMGPRMPMAHDMSMYTNHSGPLGGQYRGFASPDSIPLPPGITGPRHLGQGRGFQMEVGHTSLPFHPQPNAAGPISAAAPQSSQNSGASLTHTRQPSISFERNQHETQPQSQPISRPAPIQRPASTVPHDQHKDESKTNQQEIDELSTQLGSSALLDDSDIPLTAPPSQPLSSALPPGLPGAGRIGFAGPSLFSDHLGSSKPHFSLGAPGSGAGWAHNPFGSPGFPAAPSWGPSSGAGWPTNAFGILGGSHRAHTSRPVAIRLSVIQACKQLNTTSGTDSSGYHNVNQILRQVEQLNSPNESQIGLDEMLDICDTEGNPQNGGGSFIIKNEGPKGTFVKFEPDNNSISSSTRGSVVPGDIGSPVPGSSLPTPGSGSRQFATTNISPTTGF.

Residues 1–19 (MPSNSKRSMAPPTNVSKQI) show a composition bias toward polar residues. Disordered stretches follow at residues 1 to 210 (MPSN…AHKV), 300 to 369 (FENG…LEDA), 416 to 480 (RMQR…EQRM), 517 to 848 (EELE…IPAM), 904 to 987 (GHTS…NQQE), 1001 to 1023 (LDDS…LPPG), and 1186 to 1235 (EPDN…TTGF). Low complexity predominate over residues 20–34 (SATSTSKKAPTKPTT). The segment covering 35–52 (QNSIAGAKSTGSPETRTS) has biased composition (polar residues). Composition is skewed to basic residues over residues 70 to 80 (NRKKQKRRQKQ) and 159 to 171 (RKGK…KSRS). Positions 179 to 189 (SSTSMSTPSAS) are enriched in low complexity. Positions 340–367 (LPDDDEDLDDDYDEDDEDDEPYSEDELE) are enriched in acidic residues. The span at 426 to 437 (AAASAAHQSMHA) shows a compositional bias: low complexity. Residues 445 to 475 (LDEEEYDDEEEEDYDSQDDEEYEEDEMDAMT) are compositionally biased toward acidic residues. Residues 502–714 (AYREKIARER…QAAAVQAAKR (213 aa)) are a coiled coil. Composition is skewed to basic and acidic residues over residues 517–539 (EELE…EAQK) and 549–697 (QAKE…REEQ). Residues 698–715 (AAQQAAAQAAAVQAAKRA) are compositionally biased toward low complexity. 4 stretches are compositionally biased toward polar residues: residues 759-772 (QPSQ…SPRS), 779-794 (ISQT…STTI), 831-843 (PMQS…TNPG), and 924-959 (APQS…SQPI). The segment covering 1188-1198 (DNNSISSSTRG) has biased composition (polar residues). Residues 1206 to 1221 (GSPVPGSSLPTPGSGS) are compositionally biased toward low complexity. Positions 1222–1235 (RQFATTNISPTTGF) are enriched in polar residues.

It belongs to the NST1 family.

Its subcellular location is the cytoplasm. Functionally, may act as a negative regulator of salt tolerance. The polypeptide is Stress response protein NST1 (NST1) (Coccidioides immitis (strain RS) (Valley fever fungus)).